Here is a 425-residue protein sequence, read N- to C-terminus: Serine--tRNA ligase (425 aa).

233–235 (TAE) contacts L-serine. Residue 264–266 (RRE) participates in ATP binding. Glu-287 contacts L-serine. 351–354 (EISS) lines the ATP pocket. An L-serine-binding site is contributed by Ser-385.

Belongs to the class-II aminoacyl-tRNA synthetase family. Type-1 seryl-tRNA synthetase subfamily. Homodimer. The tRNA molecule binds across the dimer.

The protein resides in the cytoplasm. It carries out the reaction tRNA(Ser) + L-serine + ATP = L-seryl-tRNA(Ser) + AMP + diphosphate + H(+). The catalysed reaction is tRNA(Sec) + L-serine + ATP = L-seryl-tRNA(Sec) + AMP + diphosphate + H(+). Its pathway is aminoacyl-tRNA biosynthesis; selenocysteinyl-tRNA(Sec) biosynthesis; L-seryl-tRNA(Sec) from L-serine and tRNA(Sec): step 1/1. Its function is as follows. Catalyzes the attachment of serine to tRNA(Ser). Is also able to aminoacylate tRNA(Sec) with serine, to form the misacylated tRNA L-seryl-tRNA(Sec), which will be further converted into selenocysteinyl-tRNA(Sec). This chain is Serine--tRNA ligase, found in Synechococcus sp. (strain WH7803).